Consider the following 662-residue polypeptide: UvrABC system protein B (662 aa).

Positions 25-182 (KGIEKGEKFQ…KKLVEIQYER (158 aa)) constitute a Helicase ATP-binding domain. Residue 38-45 (GVTGSGKT) participates in ATP binding. The Beta-hairpin signature appears at 91-114 (YYDYYQPEAYVAQSDTYIEKDASI). One can recognise a Helicase C-terminal domain in the interval 429-595 (QIDDLYTSIQ…TIIKDIREVI (167 aa)). The 36-residue stretch at 622-657 (DKLIEKYEEEMKEAAQNLQFEKAAHLRDVIYKLKRD) folds into the UVR domain.

Belongs to the UvrB family. Forms a heterotetramer with UvrA during the search for lesions. Interacts with UvrC in an incision complex.

It is found in the cytoplasm. In terms of biological role, the UvrABC repair system catalyzes the recognition and processing of DNA lesions. A damage recognition complex composed of 2 UvrA and 2 UvrB subunits scans DNA for abnormalities. Upon binding of the UvrA(2)B(2) complex to a putative damaged site, the DNA wraps around one UvrB monomer. DNA wrap is dependent on ATP binding by UvrB and probably causes local melting of the DNA helix, facilitating insertion of UvrB beta-hairpin between the DNA strands. Then UvrB probes one DNA strand for the presence of a lesion. If a lesion is found the UvrA subunits dissociate and the UvrB-DNA preincision complex is formed. This complex is subsequently bound by UvrC and the second UvrB is released. If no lesion is found, the DNA wraps around the other UvrB subunit that will check the other stand for damage. The protein is UvrABC system protein B of Clostridium botulinum (strain Loch Maree / Type A3).